A 331-amino-acid polypeptide reads, in one-letter code: 4-hydroxythreonine-4-phosphate dehydrogenase (331 aa).

Residues His137 and Thr138 each contribute to the substrate site. A divalent metal cation contacts are provided by His167, His212, and His267. 3 residues coordinate substrate: Lys275, Asn284, and Arg293.

Belongs to the PdxA family. In terms of assembly, homodimer. Requires Zn(2+) as cofactor. It depends on Mg(2+) as a cofactor. Co(2+) serves as cofactor.

The protein localises to the cytoplasm. It catalyses the reaction 4-(phosphooxy)-L-threonine + NAD(+) = 3-amino-2-oxopropyl phosphate + CO2 + NADH. Its pathway is cofactor biosynthesis; pyridoxine 5'-phosphate biosynthesis; pyridoxine 5'-phosphate from D-erythrose 4-phosphate: step 4/5. Its function is as follows. Catalyzes the NAD(P)-dependent oxidation of 4-(phosphooxy)-L-threonine (HTP) into 2-amino-3-oxo-4-(phosphooxy)butyric acid which spontaneously decarboxylates to form 3-amino-2-oxopropyl phosphate (AHAP). The protein is 4-hydroxythreonine-4-phosphate dehydrogenase of Yersinia pestis bv. Antiqua (strain Angola).